A 362-amino-acid polypeptide reads, in one-letter code: Glutamate 5-kinase (362 aa).

Lys3 is an ATP binding site. Ser43, Asp128, and Asn140 together coordinate substrate. Residues 160-161 and 202-208 each bind ATP; these read TD and TGGMRTK. One can recognise a PUA domain in the interval 267 to 348; it reads AGAILVDAGA…REIENVLGYS (82 aa).

The protein belongs to the glutamate 5-kinase family.

The protein resides in the cytoplasm. The enzyme catalyses L-glutamate + ATP = L-glutamyl 5-phosphate + ADP. The protein operates within amino-acid biosynthesis; L-proline biosynthesis; L-glutamate 5-semialdehyde from L-glutamate: step 1/2. Catalyzes the transfer of a phosphate group to glutamate to form L-glutamate 5-phosphate. This Xanthomonas oryzae pv. oryzae (strain KACC10331 / KXO85) protein is Glutamate 5-kinase.